A 283-amino-acid polypeptide reads, in one-letter code: Undecaprenyl-diphosphatase (283 aa).

A run of 8 helical transmembrane segments spans residues 4–24 (LLILKAVIMGIVEGITEFLPI), 45–65 (ADLFIVVIQLGAILAVIYEYW), 91–111 (QLGLSLIVATIPVMLVGFTLA), 118–138 (LFNPYTVAIMLILGGLLIFYV), 153–173 (VSLKTALLIGLMQCLALIPGT), 194–214 (AEFSFFLGIPVIIGAGLLDLL), 228–248 (ILGVGVLVSFVVGLLCIRWLV), and 258–278 (IFAWLRIITGIIVLLVAWIFG).

This sequence belongs to the UppP family.

It is found in the cell inner membrane. It catalyses the reaction di-trans,octa-cis-undecaprenyl diphosphate + H2O = di-trans,octa-cis-undecaprenyl phosphate + phosphate + H(+). Its function is as follows. Catalyzes the dephosphorylation of undecaprenyl diphosphate (UPP). Confers resistance to bacitracin. In Psychrobacter sp. (strain PRwf-1), this protein is Undecaprenyl-diphosphatase.